A 374-amino-acid polypeptide reads, in one-letter code: Chaperone protein DnaJ (374 aa).

Residues 4 to 69 form the J domain; sequence SYYEILEITQ…EKRAIYDRYG (66 aa). A CR-type zinc finger spans residues 136–213; that stretch reads GCKKNIDFTY…CKGLGYNESK (78 aa). The Zn(2+) site is built by C149, C152, C165, C168, C187, C190, C201, and C204. CXXCXGXG motif repeat units lie at residues 149 to 156, 165 to 172, 187 to 194, and 201 to 208; these read CKTCNGTG, CPKCQGRG, CPDCQGSG, and CNDCKGLG.

This sequence belongs to the DnaJ family. Homodimer. Zn(2+) serves as cofactor.

It localises to the cytoplasm. Functionally, participates actively in the response to hyperosmotic and heat shock by preventing the aggregation of stress-denatured proteins and by disaggregating proteins, also in an autonomous, DnaK-independent fashion. Unfolded proteins bind initially to DnaJ; upon interaction with the DnaJ-bound protein, DnaK hydrolyzes its bound ATP, resulting in the formation of a stable complex. GrpE releases ADP from DnaK; ATP binding to DnaK triggers the release of the substrate protein, thus completing the reaction cycle. Several rounds of ATP-dependent interactions between DnaJ, DnaK and GrpE are required for fully efficient folding. Also involved, together with DnaK and GrpE, in the DNA replication of plasmids through activation of initiation proteins. The sequence is that of Chaperone protein DnaJ from Campylobacter jejuni subsp. doylei (strain ATCC BAA-1458 / RM4099 / 269.97).